Reading from the N-terminus, the 669-residue chain is DNA mismatch repair protein MutL (669 aa).

The disordered stretch occupies residues 343–408 (SAFHRAEPEE…RAPSDSSVRE (66 aa)). Positions 344-356 (AFHRAEPEERESQ) are enriched in basic and acidic residues. Positions 357 to 372 (PETTPQYSPQSVSTTV) are enriched in polar residues. Over residues 390-408 (TDYEIKPRDRAPSDSSVRE) the composition is skewed to basic and acidic residues.

It belongs to the DNA mismatch repair MutL/HexB family.

Functionally, this protein is involved in the repair of mismatches in DNA. It is required for dam-dependent methyl-directed DNA mismatch repair. May act as a 'molecular matchmaker', a protein that promotes the formation of a stable complex between two or more DNA-binding proteins in an ATP-dependent manner without itself being part of a final effector complex. The chain is DNA mismatch repair protein MutL from Vibrio parahaemolyticus serotype O3:K6 (strain RIMD 2210633).